The chain runs to 100 residues: Putative insulin-like peptide beta-type 6 (100 aa).

The first 18 residues, 1–18 (MHSIVALMLIGTILPIAA), serve as a signal peptide directing secretion. 4 disulfides stabilise this stretch: C54-C83, C66-C96, C70-C97, and C82-C87.

This sequence belongs to the insulin family.

The protein resides in the secreted. This is Putative insulin-like peptide beta-type 6 (ins-5) from Caenorhabditis elegans.